A 437-amino-acid polypeptide reads, in one-letter code: Protein RecA (437 aa).

Residue Gly69–Thr76 participates in ATP binding. The segment at His343–Gly437 is disordered. Polar residues-rich tracts occupy residues Ser350–Pro371, Gly380–Gly391, and Leu400–Pro426.

This sequence belongs to the RecA family.

Its subcellular location is the cytoplasm. Functionally, can catalyze the hydrolysis of ATP in the presence of single-stranded DNA, the ATP-dependent uptake of single-stranded DNA by duplex DNA, and the ATP-dependent hybridization of homologous single-stranded DNAs. It interacts with LexA causing its activation and leading to its autocatalytic cleavage. In Tropheryma whipplei (strain Twist) (Whipple's bacillus), this protein is Protein RecA.